The following is a 377-amino-acid chain: Multiple sugar-binding transport ATP-binding protein MsmK (377 aa).

The 243-residue stretch at 4 to 246 folds into the ABC transporter domain; it reads LNLNHIYKKY…PANKFVAGFI (243 aa). ATP is bound at residue 38–45; sequence GPSGCGKS.

Belongs to the ABC transporter superfamily.

It localises to the cell membrane. Its function is as follows. Involved in a binding protein-dependent transport system responsible for the uptake of melibiose, raffinose and isomaltotriose. Probably responsible for energy coupling to the transport system. This chain is Multiple sugar-binding transport ATP-binding protein MsmK (msmK), found in Streptococcus mutans serotype c (strain ATCC 700610 / UA159).